The sequence spans 406 residues: Fructose-1,6-bisphosphatase, chloroplastic (406 aa).

Residues 1-47 constitute a chloroplast transit peptide; the sequence is MAAAATTSSHLLLLSRQQAAASLQCGLSFRRQPGRLAGGSSAPSVRC. Positions 128, 157, 178, 180, and 181 each coordinate Mg(2+). 181–184 contributes to the substrate binding site; it reads DGSS. Cysteines 222 and 227 form a disulfide. 5 residues coordinate substrate: N286, Y318, Y336, Y338, and K348. Residue E354 coordinates Mg(2+).

The protein belongs to the FBPase class 1 family. Homotetramer. Mg(2+) is required as a cofactor.

Its subcellular location is the plastid. It localises to the chloroplast stroma. It carries out the reaction beta-D-fructose 1,6-bisphosphate + H2O = beta-D-fructose 6-phosphate + phosphate. The protein operates within carbohydrate biosynthesis; Calvin cycle. With respect to regulation, inhibited by sodium chloride. In terms of biological role, catalyzes the irreversible reaction from fructose-1,6-bisphosphate to fructose-6-phosphate and inorganic phosphate, to regenerate the primary CO(2) acceptor molecule, ribulose-1,5-bisphosphate. Involved in the regulation of photosynthetic performance and sucrose synthesis. The protein is Fructose-1,6-bisphosphatase, chloroplastic of Oryza sativa subsp. indica (Rice).